The primary structure comprises 782 residues: Endonuclease MutS2 (782 aa).

An ATP-binding site is contributed by 336–343 (GPNTGGKT). Residues 707–782 (LDLRGYRYDE…GFGVTVVEIK (76 aa)) enclose the Smr domain.

The protein belongs to the DNA mismatch repair MutS family. MutS2 subfamily. Homodimer. Binds to stalled ribosomes, contacting rRNA.

Functionally, endonuclease that is involved in the suppression of homologous recombination and thus may have a key role in the control of bacterial genetic diversity. Its function is as follows. Acts as a ribosome collision sensor, splitting the ribosome into its 2 subunits. Detects stalled/collided 70S ribosomes which it binds and splits by an ATP-hydrolysis driven conformational change. Acts upstream of the ribosome quality control system (RQC), a ribosome-associated complex that mediates the extraction of incompletely synthesized nascent chains from stalled ribosomes and their subsequent degradation. Probably generates substrates for RQC. This chain is Endonuclease MutS2, found in Staphylococcus saprophyticus subsp. saprophyticus (strain ATCC 15305 / DSM 20229 / NCIMB 8711 / NCTC 7292 / S-41).